A 906-amino-acid chain; its full sequence is MTLQPAILSEPDTPAPAEALTRVSPMMEQYHEIKAANPGLLLFYRMGDFYELFFEDAEIAARALGITLTKRGKHKGQDIPMCGVPVERSDDYLHRLIALGHRVAVCEQTEDPAAARARKSVVRRDVVRLITPGTLTEDTLLDARTNNYLLAIARVRGSTGGDRLGLAWIDISTAEFIVTECALGELAATLARINPNEAIVTDALYSDPELGPLLRELAAVTPLTRDVFDSATAERRLCDYFAVATMDGLAAMSRLEATAAAACITYVERTQLGQKPPLSPPSREIAGATMAIDPATRANLELTRTLAGERRGSLLDAIDCTVTAAGSRLLAQRLAAPLTDAGAIAHRLDAVEAFVADPILRDGLRATLRAAPDLARALARLSVGRGGPRDLAALRDGLLAADAALAQLAAATSLPQEILAAMAALRRPSRQLADEFSRALADELPLQKRDGGFVRANYQAALDETRALRDASRQVVAAMQARYADAAGVKGLKIRHNNVLGYFVEVTAQHGERLMAAPMNATFIHRQTLAGQVRFTTAELGEIEAKIANAGERALGLELEIFEKLTAMVIAATDDLRAAAQAFATLDVTLALAKLAIDDNYVRPEVDGSLSFAIEGGRHPVVEQALKRDGQPFIANACDLSPGPAQSSGQIWLITGPNMAGKSTFLRQNALIALLAQIGAFVPAARARIGIVDRLFSRVGAADDLARGRSTFMVEMVETAVILNQASERALVILDEIGRGTATFDGLSIAWAAIEHLHESNRCRALFATHYHELTALSGKLPRVFNATVRVKEWHGEVVFLHEVMPGSADRSYGIQVAKLAGLPPSVIARAKTVLAKLEANDRGQSARALADDLPLFALTARAPAEALPPTEAEQLIAALQALHPDELTPREALDALYALKAKLPK.

Residue Gly656–Ser663 coordinates ATP.

The protein belongs to the DNA mismatch repair MutS family.

This protein is involved in the repair of mismatches in DNA. It is possible that it carries out the mismatch recognition step. This protein has a weak ATPase activity. In Rhodopseudomonas palustris (strain BisA53), this protein is DNA mismatch repair protein MutS.